The primary structure comprises 567 residues: Potassium-transporting ATPase potassium-binding subunit (567 aa).

Helical transmembrane passes span 3 to 23 (FIGW…VKPL), 64 to 84 (LTFT…IYAV), 136 to 156 (ALTH…MALI), 179 to 199 (LYVL…QGMP), 254 to 274 (LSNF…TNVF), 285 to 305 (WAIL…AYWA), 330 to 350 (FGIV…CGAV), 357 to 376 (FTAL…EIIV), 421 to 441 (MLAI…AVVL), 473 to 495 (AFGG…MFVG), and 527 to 547 (GGLF…LTFF).

Belongs to the KdpA family. In terms of assembly, the system is composed of three essential subunits: KdpA, KdpB and KdpC.

The protein resides in the cell inner membrane. Functionally, part of the high-affinity ATP-driven potassium transport (or Kdp) system, which catalyzes the hydrolysis of ATP coupled with the electrogenic transport of potassium into the cytoplasm. This subunit binds the periplasmic potassium ions and delivers the ions to the membrane domain of KdpB through an intramembrane tunnel. This is Potassium-transporting ATPase potassium-binding subunit from Rhodopseudomonas palustris (strain ATCC BAA-98 / CGA009).